The chain runs to 322 residues: UV DNA damage endonuclease (322 aa).

This sequence belongs to the uve1/UvsE family.

In terms of biological role, component in a DNA repair pathway. Removal of UV LIGHT damaged nucleotides. Recognizes pyrimidine dimers and cleave a phosphodiester bond immediately 5' to the lesion. The protein is UV DNA damage endonuclease of Nostoc sp. (strain PCC 7120 / SAG 25.82 / UTEX 2576).